We begin with the raw amino-acid sequence, 156 residues long: Transcription elongation factor GreA (156 aa).

Positions 12 to 72 (YKKLEDELST…KEIEHELKYA (61 aa)) form a coiled coil.

It belongs to the GreA/GreB family.

Its function is as follows. Necessary for efficient RNA polymerase transcription elongation past template-encoded arresting sites. The arresting sites in DNA have the property of trapping a certain fraction of elongating RNA polymerases that pass through, resulting in locked ternary complexes. Cleavage of the nascent transcript by cleavage factors such as GreA or GreB allows the resumption of elongation from the new 3'terminus. GreA releases sequences of 2 to 3 nucleotides. The sequence is that of Transcription elongation factor GreA from Dehalococcoides mccartyi (strain ATCC BAA-2266 / KCTC 15142 / 195) (Dehalococcoides ethenogenes (strain 195)).